Here is a 146-residue protein sequence, read N- to C-terminus: Large ribosomal subunit protein uL15 (146 aa).

Residues 1–18 show a composition bias toward basic and acidic residues; that stretch reads MKLHELKPSEGSRKERNR. Residues 1-50 form a disordered region; the sequence is MKLHELKPSEGSRKERNRVGRGTGSGNGKTSGRGHKGQKARSGGGVRLGF. Gly residues predominate over residues 21-31; it reads RGTGSGNGKTS.

The protein belongs to the universal ribosomal protein uL15 family. As to quaternary structure, part of the 50S ribosomal subunit.

In terms of biological role, binds to the 23S rRNA. In Listeria innocua serovar 6a (strain ATCC BAA-680 / CLIP 11262), this protein is Large ribosomal subunit protein uL15.